Consider the following 209-residue polypeptide: Inorganic pyrophosphatase (209 aa).

Lys38, Arg52, and Tyr64 together coordinate substrate. Positions 92, 97, and 130 each coordinate Mg(2+). Residue Tyr167 participates in substrate binding.

Belongs to the PPase family. In terms of assembly, homohexamer. The cofactor is Mg(2+).

The protein localises to the cytoplasm. The enzyme catalyses diphosphate + H2O = 2 phosphate + H(+). Its function is as follows. Catalyzes the hydrolysis of inorganic pyrophosphate (PPi) forming two phosphate ions. The polypeptide is Inorganic pyrophosphatase (Chlamydia trachomatis serovar L2 (strain ATCC VR-902B / DSM 19102 / 434/Bu)).